Reading from the N-terminus, the 60-residue chain is Large ribosomal subunit protein uL30 (60 aa).

It belongs to the universal ribosomal protein uL30 family. In terms of assembly, part of the 50S ribosomal subunit.

This Saccharopolyspora erythraea (strain ATCC 11635 / DSM 40517 / JCM 4748 / NBRC 13426 / NCIMB 8594 / NRRL 2338) protein is Large ribosomal subunit protein uL30.